The primary structure comprises 134 residues: Cytochrome b (134 aa).

Helical transmembrane passes span 33 to 53 (FGSLLGVCLATQILTGLFLAM), 77 to 98 (WILRYLHANGASMFFICLFLHV), and 113 to 133 (WNIGIILLFAVMATAFMGYVL). Heme b contacts are provided by H83 and H97.

Belongs to the cytochrome b family. As to quaternary structure, the cytochrome bc1 complex contains 11 subunits: 3 respiratory subunits (MT-CYB, CYC1 and UQCRFS1), 2 core proteins (UQCRC1 and UQCRC2) and 6 low-molecular weight proteins (UQCRH/QCR6, UQCRB/QCR7, UQCRQ/QCR8, UQCR10/QCR9, UQCR11/QCR10 and a cleavage product of UQCRFS1). This cytochrome bc1 complex then forms a dimer. The cofactor is heme b.

The protein resides in the mitochondrion inner membrane. In terms of biological role, component of the ubiquinol-cytochrome c reductase complex (complex III or cytochrome b-c1 complex) that is part of the mitochondrial respiratory chain. The b-c1 complex mediates electron transfer from ubiquinol to cytochrome c. Contributes to the generation of a proton gradient across the mitochondrial membrane that is then used for ATP synthesis. In Rhinolophus hipposideros (Lesser horseshoe bat), this protein is Cytochrome b (MT-CYB).